The chain runs to 378 residues: Glutamate 5-kinase (378 aa).

An ATP-binding site is contributed by K15. Positions 56, 143, and 155 each coordinate substrate. ATP is bound at residue 175-176; sequence SD. The PUA domain occupies 281–358; the sequence is KGTLTIDAGA…PDVAVILGIS (78 aa).

The protein belongs to the glutamate 5-kinase family.

The protein resides in the cytoplasm. It catalyses the reaction L-glutamate + ATP = L-glutamyl 5-phosphate + ADP. Its pathway is amino-acid biosynthesis; L-proline biosynthesis; L-glutamate 5-semialdehyde from L-glutamate: step 1/2. Its function is as follows. Catalyzes the transfer of a phosphate group to glutamate to form L-glutamate 5-phosphate. This chain is Glutamate 5-kinase, found in Bradyrhizobium sp. (strain BTAi1 / ATCC BAA-1182).